The following is a 258-amino-acid chain: Thiazole synthase (258 aa).

K97 (schiff-base intermediate with DXP) is an active-site residue. 1-deoxy-D-xylulose 5-phosphate-binding positions include G158, A184 to G185, and N206 to T207.

This sequence belongs to the ThiG family. In terms of assembly, homotetramer. Forms heterodimers with either ThiH or ThiS.

It is found in the cytoplasm. The catalysed reaction is [ThiS sulfur-carrier protein]-C-terminal-Gly-aminoethanethioate + 2-iminoacetate + 1-deoxy-D-xylulose 5-phosphate = [ThiS sulfur-carrier protein]-C-terminal Gly-Gly + 2-[(2R,5Z)-2-carboxy-4-methylthiazol-5(2H)-ylidene]ethyl phosphate + 2 H2O + H(+). The protein operates within cofactor biosynthesis; thiamine diphosphate biosynthesis. Functionally, catalyzes the rearrangement of 1-deoxy-D-xylulose 5-phosphate (DXP) to produce the thiazole phosphate moiety of thiamine. Sulfur is provided by the thiocarboxylate moiety of the carrier protein ThiS. In vitro, sulfur can be provided by H(2)S. The polypeptide is Thiazole synthase (Bacteroides fragilis (strain ATCC 25285 / DSM 2151 / CCUG 4856 / JCM 11019 / LMG 10263 / NCTC 9343 / Onslow / VPI 2553 / EN-2)).